The sequence spans 366 residues: MVAGSGRTYRTVYRHLLTRVDPEVAHRWAFAGMRAASRVPVAPHVLRRAFVEPDPRLRTRVLGIDFPTPLGLAAGFDKNATGISALGNFGFSCVEIGTVTARPQPGNPKPRLHRLVADRAVVNRMGFNNAGAEVVARRLRQLRAVPPVHPVVIGVNIGKSKVVAEADAAQDYATSARLLAPYADYLVVNVSSPNTPGLRDLQAVEKLRPVLRAVREAADGAAHRHVPLLVKIAPDLSDEDVDAVADLAVEEELDGIVATNTTISREGLRSPAALVAAAGGGGLSGAPLKERSLEVLHRLAARTRGSLVLVSVGGIETAQDIAERLDAGASLVQAYTAFIYEGPGWARRVLGELAASRSRRETDRPS.

FMN is bound by residues 74-78 (AGFDK) and Thr-98. Lys-78 lines the substrate pocket. 123 to 127 (NRMGF) provides a ligand contact to substrate. Residues Asn-156 and Asn-189 each contribute to the FMN site. Asn-189 lines the substrate pocket. Ser-192 (nucleophile) is an active-site residue. Asn-194 is a binding site for substrate. Residues Lys-231 and Thr-259 each coordinate FMN. 260–261 (NT) contributes to the substrate binding site. Residues Gly-285, Gly-314, and 335 to 336 (YT) each bind FMN.

This sequence belongs to the dihydroorotate dehydrogenase family. Type 2 subfamily. As to quaternary structure, monomer. FMN is required as a cofactor.

It localises to the cell membrane. The enzyme catalyses (S)-dihydroorotate + a quinone = orotate + a quinol. It participates in pyrimidine metabolism; UMP biosynthesis via de novo pathway; orotate from (S)-dihydroorotate (quinone route): step 1/1. Functionally, catalyzes the conversion of dihydroorotate to orotate with quinone as electron acceptor. In Kineococcus radiotolerans (strain ATCC BAA-149 / DSM 14245 / SRS30216), this protein is Dihydroorotate dehydrogenase (quinone).